We begin with the raw amino-acid sequence, 176 residues long: Pituitary adenylate cyclase-activating polypeptide (176 aa).

The first 24 residues, Met1 to Gly24, serve as a signal peptide directing secretion. Positions Ser25 to Glu80 are excised as a propeptide. Positions Gln98–Gly135 are disordered. Residues Val150 to Leu158 form an important for receptor binding region. A Leucine amide modification is found at Leu158. Lys169 is subject to Lysine amide. Residues Ile173 to Leu176 constitute a propeptide that is removed on maturation.

The protein belongs to the glucagon family. Interacts with ADCYAP1R1 (via N-terminal extracellular domain); both PACAP27 and PACAP38 neuropeptides function as ligand for the ADCYAP1R1 receptor, which modulates the activity of downstream effectors. Interacts with VIPR1 and VIPR2; functions as ligand for VIPR1 and VIPR2 receptors, which modulate the activity of downstream effectors.

The protein localises to the secreted. In terms of biological role, PACAP is a neuropeptide involved in diverse array of physiological processes through activating the PACAP subfamily of class B1 G protein-coupled receptors: VIP receptor 1 (VIPR1), VIP receptor 2 (VIPR2), and PACAP type I receptor (ADCYAP1R1). Exerts neuroprotective and general cytoprotective effects due to anti-apoptotic, anti-inflammatory, and antioxidant actions. Promotes neuron projection development through the RAPGEF2/Rap1/B-Raf/ERK pathway. In chromaffin cells, induces long-lasting increase of intracellular calcium concentrations and neuroendocrine secretion. Involved in the control of glucose homeostasis, induces insulin secretion by pancreatic beta cells. PACAP exists in two bioactive forms from proteolysis of the same precursor protein, PACAP27 and PACAP38, which differ by eleven amino acid residues in the C-terminus. In Bos taurus (Bovine), this protein is Pituitary adenylate cyclase-activating polypeptide (ADCYAP1).